The sequence spans 97 residues: Protein YcgL (97 aa).

In terms of domain architecture, YcgL spans 1–85; it reads MLCVIYRSSK…PPEDLLKQHL (85 aa).

The protein is Protein YcgL of Escherichia fergusonii (strain ATCC 35469 / DSM 13698 / CCUG 18766 / IAM 14443 / JCM 21226 / LMG 7866 / NBRC 102419 / NCTC 12128 / CDC 0568-73).